The following is a 224-amino-acid chain: Ethylene-inducing xylanase 5 (224 aa).

The signal sequence occupies residues 1-16; it reads MLKSLVVLLLTSRVIA. The 187-residue stretch at 32-218 folds into the GH11 domain; it reads QATPNSQGTH…SSGFAEMTVA (187 aa). Residue asparagine 88 is glycosylated (N-linked (GlcNAc...) asparagine). The active-site Nucleophile is the glutamate 117. The Proton donor role is filled by glutamate 205.

Belongs to the glycosyl hydrolase 11 (cellulase G) family.

It carries out the reaction Endohydrolysis of (1-&gt;4)-beta-D-xylosidic linkages in xylans.. The protein operates within glycan degradation; xylan degradation. Functionally, endo-1,4-beta-xylanase involved in the hydrolysis of xylan, a major structural heterogeneous polysaccharide found in plant biomass representing the second most abundant polysaccharide in the biosphere, after cellulose. May act as an elicitor of plant defense responses in certain plants but does not exhibit any cell death when transiently expressed in N.benthamiana. This chain is Ethylene-inducing xylanase 5, found in Verticillium dahliae (strain VdLs.17 / ATCC MYA-4575 / FGSC 10137) (Verticillium wilt).